Consider the following 452-residue polypeptide: Pup--protein ligase (452 aa).

E9 contributes to the Mg(2+) binding site. Position 53 (R53) interacts with ATP. Y55 is a Mg(2+) binding site. D57 functions as the Proton acceptor in the catalytic mechanism. E63 contacts Mg(2+). 2 residues coordinate ATP: T66 and W419.

It belongs to the Pup ligase/Pup deamidase family. Pup-conjugating enzyme subfamily.

It carries out the reaction ATP + [prokaryotic ubiquitin-like protein]-L-glutamate + [protein]-L-lysine = ADP + phosphate + N(6)-([prokaryotic ubiquitin-like protein]-gamma-L-glutamyl)-[protein]-L-lysine.. It functions in the pathway protein degradation; proteasomal Pup-dependent pathway. The protein operates within protein modification; protein pupylation. Its function is as follows. Catalyzes the covalent attachment of the prokaryotic ubiquitin-like protein modifier Pup to the proteasomal substrate proteins, thereby targeting them for proteasomal degradation. This tagging system is termed pupylation. The ligation reaction involves the side-chain carboxylate of the C-terminal glutamate of Pup and the side-chain amino group of a substrate lysine. In Mycobacteroides abscessus (strain ATCC 19977 / DSM 44196 / CCUG 20993 / CIP 104536 / JCM 13569 / NCTC 13031 / TMC 1543 / L948) (Mycobacterium abscessus), this protein is Pup--protein ligase.